Here is a 2813-residue protein sequence, read N- to C-terminus: von Willebrand factor (2813 aa).

An N-terminal signal peptide occupies residues methionine 1–cysteine 22. A propeptide spanning residues threonine 23–arginine 763 is cleaved from the precursor. One can recognise a VWFD 1 domain in the interval alanine 33–lysine 201. 2 disulfide bridges follow: cysteine 35–cysteine 162 and cysteine 57–cysteine 200. N-linked (GlcNAc...) asparagine glycans are attached at residues asparagine 99, asparagine 156, and asparagine 211. One can recognise a TIL 1 domain in the interval cysteine 295–cysteine 348. In terms of domain architecture, VWFD 2 spans glycine 386–glutamate 560. Disulfide bonds link cysteine 388/cysteine 524, cysteine 410/cysteine 559, and cysteine 432/cysteine 440. Positions arginine 531–aspartate 533 match the Cell attachment site motif. 2 consecutive TIL domains span residues cysteine 652–cysteine 707 and cysteine 776–cysteine 827. Asparagine 666 carries an N-linked (GlcNAc...) asparagine glycan. Residues arginine 698–aspartate 700 carry the Cell attachment site motif. The segment at serine 764–glutamate 787 is amino-terminal. 3 disulfides stabilise this stretch: cysteine 767–cysteine 808, cysteine 776–cysteine 804, and cysteine 810–cysteine 821. Residues cysteine 788–glycine 833 form an E1 region. Residues arginine 826–aspartate 853 form a CX region. Asparagine 857 carries N-linked (GlcNAc...) asparagine glycosylation. The VWFD 3 domain occupies alanine 865–alanine 1032. 11 disulfides stabilise this stretch: cysteine 867-cysteine 996, cysteine 889-cysteine 1031, cysteine 898-cysteine 993, cysteine 914-cysteine 921, cysteine 1060-cysteine 1084, cysteine 1071-cysteine 1111, cysteine 1089-cysteine 1091, cysteine 1126-cysteine 1130, cysteine 1149-cysteine 1169, cysteine 1153-cysteine 1165, and cysteine 1196-cysteine 1199. The region spanning tyrosine 1146–cysteine 1196 is the TIL 4 domain. Residue asparagine 1231 is glycosylated (N-linked (GlcNAc...) asparagine). Disulfide bonds link cysteine 1234–cysteine 1237 and cysteine 1272–cysteine 1458. 2 VWFA domains span residues aspartate 1277 to isoleucine 1453 and aspartate 1498 to valine 1665. 2 N-linked (GlcNAc...) asparagine glycosylation sites follow: asparagine 1515 and asparagine 1574. 8 disulfides stabilise this stretch: cysteine 1669–cysteine 1670, cysteine 1686–cysteine 1872, cysteine 1879–cysteine 1904, cysteine 1899–cysteine 1940, cysteine 1927–cysteine 2088, cysteine 1950–cysteine 2085, cysteine 1972–cysteine 2123, and cysteine 1993–cysteine 2001. Residues aspartate 1691–leucine 1871 form the VWFA 3 domain. A VWFD 4 domain is found at cysteine 1948–glutamine 2124. Positions cysteine 2216 to aspartate 2261 are E2. Asparagine 2223, asparagine 2290, asparagine 2357, and asparagine 2400 each carry an N-linked (GlcNAc...) asparagine glycan. The VWFC 1 domain occupies threonine 2255–aspartate 2328. Positions lysine 2429–leucine 2495 constitute a VWFC 2 domain. A Cell attachment site motif is present at residues arginine 2507 to aspartate 2509. Residues asparagine 2546 and asparagine 2585 are each glycosylated (N-linked (GlcNAc...) asparagine). The VWFC 3 domain occupies glutamate 2580–leucine 2645. 4 cysteine pairs are disulfide-bonded: cysteine 2724–cysteine 2774, cysteine 2739–cysteine 2788, cysteine 2750–cysteine 2804, and cysteine 2754–cysteine 2806. Residues cysteine 2724–serine 2812 form the CTCK domain. The N-linked (GlcNAc...) asparagine glycan is linked to asparagine 2790.

In terms of assembly, multimeric. Interacts with F8. Post-translationally, all cysteine residues are involved in intrachain or interchain disulfide bonds. N- and O-glycosylated. As to expression, plasma.

It is found in the secreted. The protein resides in the extracellular space. Its subcellular location is the extracellular matrix. Its function is as follows. Important in the maintenance of hemostasis, it promotes adhesion of platelets to the sites of vascular injury by forming a molecular bridge between sub-endothelial collagen matrix and platelet-surface receptor complex, glycoprotein Ibalpha/IX/V. Also acts as a chaperone for coagulation factor VIII, delivering it to the site of injury, stabilizing its heterodimeric structure and protecting it from premature clearance from plasma. In Canis lupus familiaris (Dog), this protein is von Willebrand factor (VWF).